The chain runs to 154 residues: Iron-sulfur cluster assembly 2 homolog, mitochondrial (154 aa).

A mitochondrion-targeting transit peptide spans 1–8 (MAAARGLS). Residues C79, C144, and C146 each contribute to the Fe cation site.

The protein belongs to the HesB/IscA family. Heterotetramer; forms a dimer of dimers with IBA57. Interacts with [2Fe-2S]-ISCA2 forming the heterodimer [2Fe- 2S]-ISCA2-IBA57 complex; [2Fe-2S] cluster binding is absolutely required to promote the complex formation.

It localises to the mitochondrion. Its function is as follows. Involved in the maturation of mitochondrial 4Fe-4S proteins functioning late in the iron-sulfur cluster assembly pathway. May be involved in the binding of an intermediate of Fe/S cluster assembly. The sequence is that of Iron-sulfur cluster assembly 2 homolog, mitochondrial (ISCA2) from Pongo abelii (Sumatran orangutan).